A 380-amino-acid chain; its full sequence is Succinyl-diaminopimelate desuccinylase (380 aa).

Histidine 69 is a binding site for Zn(2+). The active site involves aspartate 71. Aspartate 102 lines the Zn(2+) pocket. Glutamate 136 (proton acceptor) is an active-site residue. Residues glutamate 137, glutamate 165, and histidine 351 each contribute to the Zn(2+) site.

This sequence belongs to the peptidase M20A family. DapE subfamily. In terms of assembly, homodimer. It depends on Zn(2+) as a cofactor. Co(2+) is required as a cofactor.

The catalysed reaction is N-succinyl-(2S,6S)-2,6-diaminopimelate + H2O = (2S,6S)-2,6-diaminopimelate + succinate. The protein operates within amino-acid biosynthesis; L-lysine biosynthesis via DAP pathway; LL-2,6-diaminopimelate from (S)-tetrahydrodipicolinate (succinylase route): step 3/3. Catalyzes the hydrolysis of N-succinyl-L,L-diaminopimelic acid (SDAP), forming succinate and LL-2,6-diaminopimelate (DAP), an intermediate involved in the bacterial biosynthesis of lysine and meso-diaminopimelic acid, an essential component of bacterial cell walls. This Bordetella petrii (strain ATCC BAA-461 / DSM 12804 / CCUG 43448) protein is Succinyl-diaminopimelate desuccinylase.